We begin with the raw amino-acid sequence, 266 residues long: MSQGFLTFPTIDPVLIQLGPLAIRWYGLMYLVGFLFAMWLANRRADKPNSGWTRDQVSDLLFAGFLGVVLGGRIGYVLFYNFGLFLDNPLYLFQVWTGGMSFHGGLLGVMTAMLWYGHRNKRTFFSVADFIAPLVPFGLGMGRMGNFMNGELWGRVTDMPWAMVFPTGGPFPRHPSQLYEAFLEGFVLLIILNIFIRKPRPAGAVSGLFLIGYGSFRFIIEYFREPDAQLGLFGDWISMGQILSSPMIIFGALLMLWAYKAQPKTA.

7 consecutive transmembrane segments (helical) span residues 21 to 41, 60 to 80, 95 to 115, 124 to 144, 176 to 196, 203 to 223, and 236 to 256; these read LAIR…MWLA, LLFA…VLFY, VWTG…AMLW, FFSV…MGRM, SQLY…NIFI, GAVS…IEYF, and WISM…LLML. R143 is a binding site for a 1,2-diacyl-sn-glycero-3-phospho-(1'-sn-glycerol).

It belongs to the Lgt family.

The protein resides in the cell inner membrane. The enzyme catalyses L-cysteinyl-[prolipoprotein] + a 1,2-diacyl-sn-glycero-3-phospho-(1'-sn-glycerol) = an S-1,2-diacyl-sn-glyceryl-L-cysteinyl-[prolipoprotein] + sn-glycerol 1-phosphate + H(+). The protein operates within protein modification; lipoprotein biosynthesis (diacylglyceryl transfer). Its function is as follows. Catalyzes the transfer of the diacylglyceryl group from phosphatidylglycerol to the sulfhydryl group of the N-terminal cysteine of a prolipoprotein, the first step in the formation of mature lipoproteins. The chain is Phosphatidylglycerol--prolipoprotein diacylglyceryl transferase from Photobacterium profundum (strain SS9).